The following is a 630-amino-acid chain: Pentatricopeptide repeat-containing protein At1g26460, mitochondrial (630 aa).

Residues 1-115 (MASHLFTRSR…RALSETLDMN (115 aa)) constitute a mitochondrion transit peptide. The segment at 42–79 (LLATESTDHDPSNHQSTSTPLPPNPATGSPLYQENWRS) is disordered. Polar residues predominate over residues 67 to 77 (ATGSPLYQENW). 6 PPR repeats span residues 154-189 (DVNL…SVEP), 190-224 (NTAS…GKDS), 227-261 (DDES…GYML), 468-503 (SVAA…GLTP), 504-538 (NIDS…GVKP), and 539-573 (DSRT…GFEP).

The protein belongs to the PPR family. P subfamily.

Its subcellular location is the mitochondrion. The protein is Pentatricopeptide repeat-containing protein At1g26460, mitochondrial of Arabidopsis thaliana (Mouse-ear cress).